Consider the following 338-residue polypeptide: Glycerol-3-phosphate dehydrogenase [NAD(P)+] (338 aa).

Residues S14, Y15, H35, and K109 each coordinate NADPH. Residues K109, G138, and T140 each coordinate sn-glycerol 3-phosphate. A142 contributes to the NADPH binding site. Residues K194, D247, S257, R258, and N259 each contribute to the sn-glycerol 3-phosphate site. The active-site Proton acceptor is the K194. An NADPH-binding site is contributed by R258. Residues V282 and E284 each coordinate NADPH.

Belongs to the NAD-dependent glycerol-3-phosphate dehydrogenase family.

It localises to the cytoplasm. The catalysed reaction is sn-glycerol 3-phosphate + NAD(+) = dihydroxyacetone phosphate + NADH + H(+). It carries out the reaction sn-glycerol 3-phosphate + NADP(+) = dihydroxyacetone phosphate + NADPH + H(+). It functions in the pathway membrane lipid metabolism; glycerophospholipid metabolism. Catalyzes the reduction of the glycolytic intermediate dihydroxyacetone phosphate (DHAP) to sn-glycerol 3-phosphate (G3P), the key precursor for phospholipid synthesis. This Shewanella baltica (strain OS195) protein is Glycerol-3-phosphate dehydrogenase [NAD(P)+].